The following is a 438-amino-acid chain: UDP-N-acetylmuramoylalanine--D-glutamate ligase (438 aa).

Position 112-118 (112-118) interacts with ATP; that stretch reads GSNGKST.

It belongs to the MurCDEF family.

It is found in the cytoplasm. It carries out the reaction UDP-N-acetyl-alpha-D-muramoyl-L-alanine + D-glutamate + ATP = UDP-N-acetyl-alpha-D-muramoyl-L-alanyl-D-glutamate + ADP + phosphate + H(+). It functions in the pathway cell wall biogenesis; peptidoglycan biosynthesis. In terms of biological role, cell wall formation. Catalyzes the addition of glutamate to the nucleotide precursor UDP-N-acetylmuramoyl-L-alanine (UMA). The polypeptide is UDP-N-acetylmuramoylalanine--D-glutamate ligase (Salmonella choleraesuis (strain SC-B67)).